We begin with the raw amino-acid sequence, 212 residues long: MTTQKIVPTKSTDGSKLFRHQAKFVAGAMNINQILNFSLPEIAFVGKSNVGKSSLINTICNNKNLAKVSNTPGRTRQINFFNLADKLIIVDLPGYGFANVPISVKEQWGVLISYYLRNSYNLRLVNLLIDSRRGIKENDKKVADLLLANKREFQIIFTKSDKVTDHKNLHDEAQNFLATLNYSCNVMYVSNRSKEGARELKASLAKCIKPQK.

The region spanning 38 to 210 is the EngB-type G domain; it reads SLPEIAFVGK…KASLAKCIKP (173 aa). Residues 46–53, 73–77, 91–94, 158–161, and 189–191 contribute to the GTP site; these read GKSNVGKS, GRTRQ, DLPG, TKSD, and VSN. Residues Ser-53 and Thr-75 each coordinate Mg(2+).

The protein belongs to the TRAFAC class TrmE-Era-EngA-EngB-Septin-like GTPase superfamily. EngB GTPase family. The cofactor is Mg(2+).

Its function is as follows. Necessary for normal cell division and for the maintenance of normal septation. The protein is Probable GTP-binding protein EngB of Rickettsia conorii (strain ATCC VR-613 / Malish 7).